A 656-amino-acid polypeptide reads, in one-letter code: Methionine--tRNA ligase (656 aa).

The 'HIGH' region signature appears at 13 to 23 (YYPSGNLHIGH). Positions 308–312 (KMSKS) match the 'KMSKS' region motif. K311 lines the ATP pocket. One can recognise a tRNA-binding domain in the interval 556-656 (DFDKVEIKAA…SAIPNGAVIK (101 aa)).

The protein belongs to the class-I aminoacyl-tRNA synthetase family. MetG type 2B subfamily. As to quaternary structure, homodimer.

The protein resides in the cytoplasm. The enzyme catalyses tRNA(Met) + L-methionine + ATP = L-methionyl-tRNA(Met) + AMP + diphosphate. In terms of biological role, is required not only for elongation of protein synthesis but also for the initiation of all mRNA translation through initiator tRNA(fMet) aminoacylation. The sequence is that of Methionine--tRNA ligase from Staphylococcus epidermidis (strain ATCC 12228 / FDA PCI 1200).